The following is a 334-amino-acid chain: Holliday junction branch migration complex subunit RuvB (334 aa).

The large ATPase domain (RuvB-L) stretch occupies residues 1–182; that stretch reads MDERLVSSEL…FGVLSRLEYY (182 aa). ATP contacts are provided by residues Leu21, Arg22, Gly63, Lys66, Thr67, Thr68, 129–131, Arg172, Tyr182, and Arg219; that span reads EDF. Thr67 contributes to the Mg(2+) binding site. The tract at residues 183–253 is small ATPAse domain (RuvB-S); the sequence is TRDELSEIVI…VAVDALERLQ (71 aa). Residues 256 to 334 are head domain (RuvB-H); it reads KLGLDHIDRK…HFKMEVPNHD (79 aa). DNA contacts are provided by Arg311 and Arg316.

The protein belongs to the RuvB family. In terms of assembly, homohexamer. Forms an RuvA(8)-RuvB(12)-Holliday junction (HJ) complex. HJ DNA is sandwiched between 2 RuvA tetramers; dsDNA enters through RuvA and exits via RuvB. An RuvB hexamer assembles on each DNA strand where it exits the tetramer. Each RuvB hexamer is contacted by two RuvA subunits (via domain III) on 2 adjacent RuvB subunits; this complex drives branch migration. In the full resolvosome a probable DNA-RuvA(4)-RuvB(12)-RuvC(2) complex forms which resolves the HJ.

Its subcellular location is the cytoplasm. It carries out the reaction ATP + H2O = ADP + phosphate + H(+). The RuvA-RuvB-RuvC complex processes Holliday junction (HJ) DNA during genetic recombination and DNA repair, while the RuvA-RuvB complex plays an important role in the rescue of blocked DNA replication forks via replication fork reversal (RFR). RuvA specifically binds to HJ cruciform DNA, conferring on it an open structure. The RuvB hexamer acts as an ATP-dependent pump, pulling dsDNA into and through the RuvAB complex. RuvB forms 2 homohexamers on either side of HJ DNA bound by 1 or 2 RuvA tetramers; 4 subunits per hexamer contact DNA at a time. Coordinated motions by a converter formed by DNA-disengaged RuvB subunits stimulates ATP hydrolysis and nucleotide exchange. Immobilization of the converter enables RuvB to convert the ATP-contained energy into a lever motion, pulling 2 nucleotides of DNA out of the RuvA tetramer per ATP hydrolyzed, thus driving DNA branch migration. The RuvB motors rotate together with the DNA substrate, which together with the progressing nucleotide cycle form the mechanistic basis for DNA recombination by continuous HJ branch migration. Branch migration allows RuvC to scan DNA until it finds its consensus sequence, where it cleaves and resolves cruciform DNA. In Bacillus licheniformis (strain ATCC 14580 / DSM 13 / JCM 2505 / CCUG 7422 / NBRC 12200 / NCIMB 9375 / NCTC 10341 / NRRL NRS-1264 / Gibson 46), this protein is Holliday junction branch migration complex subunit RuvB.